A 90-amino-acid polypeptide reads, in one-letter code: Probable two-component-system connector protein YmgA (90 aa).

A compositionally biased stretch (polar residues) spans 63–80 (SDSGGPNRRTATADNKSM). The tract at residues 63–90 (SDSGGPNRRTATADNKSMFNGKKINRIH) is disordered.

Probably a connector protein for RcsB/C regulation of biofilm formation, providing additional signal input into the two-component signaling pathway. May serve to stimulate biofilm maturation, probably via the Rcs phosphorelay. Mild overexpression at 16 degrees Celsius increases the production of colanic acid, an exopolysaccharide and matrix component, and reduces adhesive curli fimbriae expression. Both of these effects require RcsB. This Escherichia coli (strain K12) protein is Probable two-component-system connector protein YmgA (ymgA).